We begin with the raw amino-acid sequence, 882 residues long: Probable LRR receptor-like serine/threonine-protein kinase At1g12460 (882 aa).

The first 21 residues, 1–21 (MRKVHLFLVLVHFIYISTSRS), serve as a signal peptide directing secretion. Over 22 to 515 (DSISERDILL…SRNSDALSIS (494 aa)) the chain is Extracellular. The N-linked (GlcNAc...) asparagine glycan is linked to Asn76. LRR repeat units follow at residues 92–113 (FIRV…DYFK), 116–138 (TLWT…ISEL), 140–162 (SLRF…LFKF), 165–187 (KTKF…IVNC), 189–210 (NLVG…RICD), 213–235 (VLEY…IQKC), 237–258 (RLIL…AVLT), 261–283 (NITY…VDCS), 285–308 (SLEF…MGCK), 309–331 (SLKL…IGKM), 333–355 (SLSV…IGSL), 357–379 (FLQV…ISNC), 381–404 (VLLE…LNLT), 405–427 (NIKI…LGNL), 429–451 (KVQF…LGSL), and 453–475 (TLTH…PMIQ). A glycan (N-linked (GlcNAc...) asparagine) is linked at Asn121. N-linked (GlcNAc...) asparagine glycans are attached at residues Asn261 and Asn266. N-linked (GlcNAc...) asparagine glycans are attached at residues Asn321 and Asn341. 3 N-linked (GlcNAc...) asparagine glycosylation sites follow: Asn402, Asn417, and Asn426. Residues Asn458 and Asn463 are each glycosylated (N-linked (GlcNAc...) asparagine). Residues 516 to 536 (VIIVIIAAAVILFGVCIVLAL) traverse the membrane as a helical segment. Residues 537-882 (NLRARKRRKD…LESIRNGFGS (346 aa)) are Cytoplasmic-facing. Position 589 is a phosphothreonine (Thr589). One can recognise a Protein kinase domain in the interval 593 to 876 (LDKENIIGMG…AEVVQVLESI (284 aa)). ATP is bound by residues 599-607 (IGMGSIGSV) and Lys621. Phosphotyrosine is present on Tyr770.

It belongs to the protein kinase superfamily. Ser/Thr protein kinase family.

It is found in the cell membrane. It catalyses the reaction L-seryl-[protein] + ATP = O-phospho-L-seryl-[protein] + ADP + H(+). The enzyme catalyses L-threonyl-[protein] + ATP = O-phospho-L-threonyl-[protein] + ADP + H(+). The polypeptide is Probable LRR receptor-like serine/threonine-protein kinase At1g12460 (Arabidopsis thaliana (Mouse-ear cress)).